We begin with the raw amino-acid sequence, 89 residues long: MTVLTSYKLYCGPDFPAPLEKKEKREKGKIRNISFLIVLTKGPIWKVSSMESTSYNGCIENLDCKFRKSFIEEIIAYEGFGKYIEVINF.

This is an uncharacterized protein from Schizosaccharomyces pombe (strain 972 / ATCC 24843) (Fission yeast).